A 598-amino-acid chain; its full sequence is MTEPNLDEDGSKSSFQKTVVLRDWWLIKCPKEFEGKQFGVAGFEESVETRAMRVFTSSPITKALDVFTLLASDGIYITLRGFLNKERVLKNGFNPEISREFIFGFPPCWERVCNSCFEGDSFGTDVNTVPSTIEKACPPILSPCKYSNRNLKDNPAESREKSNVTETDIAEINDKGGSGARDIKTARRRSLHLQIKRILESSKVRKTANDGDHGSEFLNTAKRGDVERDGCEVINNEDSEWKLDESEVQNLCNDGDNGSEGFIKAKSSDVEKDKSEAIDNDVISPAVGSGIKHTGADNVDKVTSASATGESLTSEQQNGLLVTTASPHSLLKDLAKSSKPEKKGISKKSGKILRSDDNVVDPMNYSGTKVKSAENKRKIDASKLQSPTSNVAEHSKEGLNNAKSNDVEKDVCVAINNEVISPVKGFGKRLSGTDVERLTSKNATKESLTSVQRKGRVKVSKAFQDPLSKGKSKKSEKTLQSNSNVVEPMNHFRSEAEEAEENLSWEKIKRKIDFDVEVTPEKKVKQQKTNAASTDSLGQKRSRSGRVLVSSLEFWRNQIPVYDMDRNLIQVKDGSETNSAPSKGKGSDSRKRRNLKIK.

The SANTA domain occupies 19 to 111; it reads VVLRDWWLIK…IFGFPPCWER (93 aa). Basic and acidic residues-rich tracts occupy residues 335–344 and 371–381; these read AKSSKPEKKG and KSAENKRKIDA. Disordered regions lie at residues 335–403, 445–500, 520–542, and 572–598; these read AKSS…NNAK, KESL…EEAE, PEKK…QKRS, and KDGS…LKIK. Residues 383–392 show a composition bias toward polar residues; that stretch reads KLQSPTSNVA. Residues 527–539 are compositionally biased toward polar residues; it reads QKTNAASTDSLGQ. The tract at residues 538-572 is required for localization at centromeres; the sequence is GQKRSRSGRVLVSSLEFWRNQIPVYDMDRNLIQVK.

Belongs to the KNL2 family. In terms of tissue distribution, expressed in shoot apical meristem, leaf primordia, basal parts of emerging leaves, inflorescence meristems, young inflorescences, developing flower buds, developing sepals and pistils, styles and young siliques.

It is found in the nucleus. It localises to the nucleoplasm. The protein resides in the nuclear body. Its subcellular location is the nucleolus. The protein localises to the chromosome. It is found in the centromere. In terms of biological role, involved in recognition of centromeres and centromeric localization of the centromere-specific histone CENH3. Required for normal progression of mitosis and meiosis. May play a role in the determination of the epigenetic status of centromeres. Binds DNA and RNA in vitro. The chain is Kinetochore-associated protein KNL-2 homolog from Arabidopsis thaliana (Mouse-ear cress).